Consider the following 212-residue polypeptide: MIVIFLGPPGAGKGTQGKKIAKKINLPHIAIGDIFRTIIKTSTSEAELINNYVKQGELIPNEIVNQVIKNFLLSSEYKNGYILDGYPRNLEQAKFFESFIKEKIKIIYFDVSDELLIKRILGRYSCKNCGKIYNRYFLQPKTDNVCDVCGSSTFDYRKDDNEEVIKKRIEVYKTETYPLIDYYKNSGNFYIVNGSKSEQEIEIDIQKILKIN.

Position 10–15 (10–15) interacts with ATP; the sequence is GAGKGT. Positions 30 to 59 are NMP; sequence AIGDIFRTIIKTSTSEAELINNYVKQGELI. Residues R36, 57–59, 85–88, and Q92 each bind AMP; these read ELI and GYPR. The interval 122-160 is LID; sequence GRYSCKNCGKIYNRYFLQPKTDNVCDVCGSSTFDYRKDD. An ATP-binding site is contributed by R123. Zn(2+) contacts are provided by C126 and C129. Position 132 to 133 (132 to 133) interacts with ATP; that stretch reads IY. 2 residues coordinate Zn(2+): C146 and C149. Residues R157 and R168 each contribute to the AMP site. K196 contributes to the ATP binding site.

Belongs to the adenylate kinase family. As to quaternary structure, monomer.

It is found in the cytoplasm. The catalysed reaction is AMP + ATP = 2 ADP. Its pathway is purine metabolism; AMP biosynthesis via salvage pathway; AMP from ADP: step 1/1. Its function is as follows. Catalyzes the reversible transfer of the terminal phosphate group between ATP and AMP. Plays an important role in cellular energy homeostasis and in adenine nucleotide metabolism. The chain is Adenylate kinase from Rickettsia africae (strain ESF-5).